The primary structure comprises 2548 residues: Unconventional myosin-IXa (2548 aa).

In terms of domain architecture, Ras-associating spans 14 to 112 (NEHTLRIYPG…YRFLLREKNL (99 aa)). A Myosin motor domain is found at 146–1016 (KDFDDLCSLP…ERQHLQDLLH (871 aa)). Residues 175 to 195 (IYTYVGSILIVINPFKFLPIY) form a helical membrane-spanning segment. 239 to 246 (GESGSGKT) contributes to the ATP binding site. Position 755 is a phosphoserine (Ser-755). An actin-binding region spans residues 898-920 (LSKLMETLGQAEPYFVKCIRSNA). IQ domains follow at residues 1021–1041 (RRIILLQRWFRVLLCRQHFLH), 1042–1071 (LRQASVIIQRFWRNYLNQKQVRDAAVQKDA), 1074–1103 (MASAAALLQASWRAHLERQRYLELRAAAIV), 1115–1144 (RHMAAICIQARWKAYRESKRYQEQRKKIIL), and 1138–1167 (QRKKIILLQSTCRGFRARQRFKALKEQRLR). The interval 1021–1162 (RRIILLQRWF…RARQRFKALK (142 aa)) is neck or regulatory domain. The segment at 1163-2511 (EQRLRETKPE…LKNVKNSPQK (1349 aa)) is tail. Residues 1223–1236 (SVDCLKESPNKQQE) show a composition bias toward basic and acidic residues. The interval 1223 to 1250 (SVDCLKESPNKQQERAQSQSGVDLQEDV) is disordered. Phosphoserine occurs at positions 1242 and 1258. Residues 1264–1291 (QKKVGRAKRESRRMRELEQAIFSLELLK) are a coiled coil. 2 positions are modified to phosphoserine: Ser-1299 and Ser-1317. Residues 1299 to 1386 (SPSEDRRWST…SNETSSAEHL (88 aa)) are disordered. Composition is skewed to low complexity over residues 1324–1337 (SESSQGSLELLSYE) and 1356–1366 (FPSPKISSSPK). Ser-1364 is modified (phosphoserine). Over residues 1372–1381 (NALSASNETS) the composition is skewed to polar residues. Residues 1486–1532 (VLKKLEKLNTEKEERQKQLQQQNEKEMMEQIRQQTDILEKERKAFKT) are a coiled coil. A disordered region spans residues 1804–1836 (YHPTPPLSPELPGSCRKEFKENKEPSPKAKRKR). Residues 1818 to 1830 (CRKEFKENKEPSP) show a composition bias toward basic and acidic residues. At Ser-1948 the chain carries Phosphoserine. 2 Phorbol-ester/DAG-type zinc fingers span residues 1999–2048 (GHIF…TAKC) and 2068–2119 (LTSE…DAES). One can recognise a Rho-GAP domain in the interval 2063-2251 (VELSRLTSED…LIVVEQMNKY (189 aa)). At Ser-2294 the chain carries Phosphoserine. Residues 2315–2358 (AAMETDITEQQQAAMQQEERVLTEQIENLQKEKEELTFEMLVLE) adopt a coiled-coil conformation. 2 disordered regions span residues 2359–2383 (PRASDDETLESEASIGTADSSENLN) and 2401–2424 (SSLKTAGKSEPSSKLRKQLKKQQD). Position 2464 is a phosphoserine (Ser-2464). Residues 2490 to 2531 (RGTFNPEKGKQKLKNVKNSPQKTKETPEGTVMSGRRKTVDPD) are disordered.

This sequence belongs to the TRAFAC class myosin-kinesin ATPase superfamily. Myosin family. In terms of processing, phosphorylated by ALPK1 following monosodium urate monohydrate (MSU)-induced inflammation. In terms of tissue distribution, found to be expressed in testis and placenta and at lower levels in all the examined tissues with the exception of liver. Isoform 5: Found in leukocytes but not in brain, retina or testis.

The protein resides in the membrane. It localises to the cytoplasm. It is found in the synapse. The protein localises to the cell projection. Its subcellular location is the growth cone. Its function is as follows. Myosins are actin-based motor molecules with ATPase activity. Unconventional myosins serve in intracellular movements. Regulates Rho by stimulating it's GTPase activity in neurons. Required for the regulation of neurite branching and motor neuron axon guidance. The polypeptide is Unconventional myosin-IXa (MYO9A) (Homo sapiens (Human)).